We begin with the raw amino-acid sequence, 1189 residues long: Disabled homolog 2-interacting protein (1189 aa).

The segment at 1 to 75 (MSAGGNARKS…EPSASTPFRV (75 aa)) is disordered. The span at 20–38 (LLRRPRLQRQRSRSRSRTR) shows a compositional bias: basic residues. Residues 39-49 (PARESPQERPG) are compositionally biased toward basic and acidic residues. Residues 59-73 (SEKNPSMEPSASTPF) are compositionally biased toward polar residues. Residues 101–202 (SFRHILPGFR…WMENLRRAVH (102 aa)) form the PH domain. Residues 193-311 (WMENLRRAVH…AGRQFVEKWY (119 aa)) form the C2 domain. One can recognise a Ras-GAP domain in the interval 387–595 (GKVKDFLTDL…TNMQRFLLEI (209 aa)). The segment at 646–943 (LRDVHTALST…RTPPTLLSTL (298 aa)) is necessary for interaction with AKT1. Residues 653–668 (LSTPGSGQLPGTNDLA) show a composition bias toward polar residues. Disordered regions lie at residues 653–679 (LSTP…SSVS) and 715–738 (RSSG…PDLQ). Residues 669–679 (STPGSGSSSVS) show a composition bias toward low complexity. Residues 715–731 (RSSGVQPSPARSSSYSE) are compositionally biased toward polar residues. At Ser728 the chain carries Phosphoserine; by MAP3K5 and RIPK1. Ser747 carries the post-translational modification Phosphoserine. 5 disordered regions span residues 804-823 (VPTP…PQLL), 843-865 (PRGL…NSEE), 895-998 (SLTE…SPNA), 1015-1034 (EDEG…SKEE), and 1163-1189 (ARNG…SSNC). The segment covering 852-865 (EGHSSLSSHSNSEE) has biased composition (low complexity). Pro residues predominate over residues 919-931 (QPPPPPPPPPPAP). 2 stretches are compositionally biased toward polar residues: residues 939 to 955 (LLST…TLAS) and 967 to 976 (LRQQSSSSKG). A phosphoserine mark is found at Ser978 and Ser995. Residues 1023–1034 (PPHRDRLRSKEE) are compositionally biased toward basic and acidic residues. Positions 1025-1159 (HRDRLRSKEE…SALTQLKERY (135 aa)) form a coiled coil.

In terms of assembly, on plasma membrane, exists in an inactive form complexed with TNFR1; in response to TNF-alpha, dissociates from TNFR1 complex, translocates to cytoplasm and forms part of an intracellular signaling complex comprising TRADD, RIPK1, TRAF2 and MAP3K5. Interacts with DAB1. Part of a cytoplasmic complex made of HIPK1, DAB2IP and MAP3K5 in response to TNF-alpha; this complex formation promotes MAP3K5-JNK activation and subsequent apoptosis. Interacts (via N-terminal domain) with JAK2; the interaction occurs in a IFNG/IFN-gamma-dependent manner and inhibits JAK2 autophosphorylation activity. Interacts (via C2 domain) with GSK3B; the interaction stimulates GSK3B kinase activation. Interacts (via C2 domain) with PPP2CA. Interacts (via proline-rich motif) with a regulatory p85 subunit (via SH3 domain) of the PI3K complex; the interaction inhibits the PI3K-AKT complex activity in a TNF-alpha-dependent manner in prostate cancer (PCa) cells. Interacts with AKT1; the interaction is increased in a TNF-alpha-induced manner. Interacts (via C2 domain and active form preferentially) with KDR/VEGFR2 (tyrosine-phosphorylated active form preferentially); the interaction occurs at the late phase of VEGFA response and inhibits KDR/VEGFR2 activity. Interacts (via N-terminus C2 domain) with MAP3K5 ('Ser-966' dephosphorylated form preferentially); the interaction occurs in a TNF-alpha-induced manner. Interacts (via Ras-GAP domain) with the catalytic subunit of protein phosphatase PP2A; the interaction occurs in resting endothelial cells, is further enhanced by TNF-alpha stimulation and is required to bridge PP2A to MAP3K5. Interacts (via C-terminus PER domain) with TRAF2 (via zinc fingers); the interaction occurs in a TNF-alpha-dependent manner. Interacts with 14-3-3 proteins; the interaction occurs in a TNF-alpha-dependent manner. Interacts (via Ras-GAP domain) with RIPK1 (via kinase domain); the interaction occurs in a TNF-alpha-dependent manner. Interacts (via PH domain) with ERN1. Interacts with TRAF2. Interacts (via NPXY motif) with DAB2 (via PID domain). Interacts with RAB40C; acts as a GAP for RAB40C. In response to TNF-alpha-induction, phosphorylated at Ser-728; phosphorylation leads to a conformational change, and thus, increases its association with 14-3-3 proteins, MAP3K5, RIPK1 and TRAF2 in endothelial cells; also stimulates regulatory p85 subunit sequestring and PI3K-p85 complex activity inhibition. In terms of tissue distribution, expressed in vascular endothelium of muscle and aorta, in smooth muscle cells of aorta and epithelial cells of lung. Expressed throughout the brain, including olfactory bulb, hypothalamus, cerebellum and cerebral cortex. Expressed in the soma and processes of neurons in a variety of brain structures, including the developing cerebral cortex, CA1 pyramidal neurons and Purkinje cells. Poorly expressed in medulloblastoma cells compared to cerebellar precursor proliferating progenitor cells (at protein level). Highly expressed in the brain, salivary gland, and testis; moderate expression in kidney and heart. Low expression in the lung, seminal vesicle, ventral prostate, epididymis, liver, and bladder. Very low expression in the coagulation gland and skeleton muscles. Lowest expression seen in spleen.

It localises to the cytoplasm. The protein resides in the cell membrane. Its subcellular location is the membrane. It is found in the cell projection. The protein localises to the dendrite. Functionally, functions as a scaffold protein implicated in the regulation of a large spectrum of both general and specialized signaling pathways. Involved in several processes such as innate immune response, inflammation and cell growth inhibition, apoptosis, cell survival, angiogenesis, cell migration and maturation. Also plays a role in cell cycle checkpoint control; reduces G1 phase cyclin levels resulting in G0/G1 cell cycle arrest. Mediates signal transduction by receptor-mediated inflammatory signals, such as the tumor necrosis factor (TNF), interferon (IFN) or lipopolysaccharide (LPS). Modulates the balance between phosphatidylinositol 3-kinase (PI3K)-AKT-mediated cell survival and apoptosis stimulated kinase (MAP3K5)-JNK signaling pathways; sequesters both AKT1 and MAP3K5 and counterbalances the activity of each kinase by modulating their phosphorylation status in response to pro-inflammatory stimuli. Acts as a regulator of the endoplasmic reticulum (ER) unfolded protein response (UPR) pathway; specifically involved in transduction of the ER stress-response to the JNK cascade through ERN1. Mediates TNF-alpha-induced apoptosis activation by facilitating dissociation of inhibitor 14-3-3 from MAP3K5; recruits the PP2A phosphatase complex which dephosphorylates MAP3K5 on 'Ser-966', leading to the dissociation of 13-3-3 proteins and activation of the MAP3K5-JNK signaling pathway in endothelial cells. Also mediates TNF/TRAF2-induced MAP3K5-JNK activation, while it inhibits CHUK-NF-kappa-B signaling. Acts a negative regulator in the IFN-gamma-mediated JAK-STAT signaling cascade by inhibiting smooth muscle cell (VSMCs) proliferation and intimal expansion, and thus, prevents graft arteriosclerosis (GA). Acts as a GTPase-activating protein (GAP) for the ADP ribosylation factor 6 (ARF6) and Ras. Promotes hydrolysis of the ARF6-bound GTP and thus, negatively regulates phosphatidylinositol 4,5-bisphosphate (PIP2)-dependent TLR4-TIRAP-MyD88 and NF-kappa-B signaling pathways in endothelial cells in response to lipopolysaccharides (LPS). Binds specifically to phosphatidylinositol 4-phosphate (PtdIns4P) and phosphatidylinositol 3-phosphate (PtdIns3P). In response to vascular endothelial growth factor (VEGFA), acts as a negative regulator of the VEGFR2-PI3K-mediated angiogenic signaling pathway by inhibiting endothelial cell migration and tube formation. In the developing brain, promotes both the transition from the multipolar to the bipolar stage and the radial migration of cortical neurons from the ventricular zone toward the superficial layer of the neocortex in a glial-dependent locomotion process. Probable downstream effector of the Reelin signaling pathway; promotes Purkinje cell (PC) dendrites development and formation of cerebellar synapses. Also functions as a tumor suppressor protein in prostate cancer progression; prevents cell proliferation and epithelial-to-mesenchymal transition (EMT) through activation of the glycogen synthase kinase-3 beta (GSK3B)-induced beta-catenin and inhibition of PI3K-AKT and Ras-MAPK survival downstream signaling cascades, respectively. The chain is Disabled homolog 2-interacting protein (Dab2ip) from Mus musculus (Mouse).